We begin with the raw amino-acid sequence, 1409 residues long: DNA-directed RNA polymerase subunit beta' (1409 aa).

Cys-72, Cys-74, Cys-87, and Cys-90 together coordinate Zn(2+). Asp-462, Asp-464, and Asp-466 together coordinate Mg(2+). Zn(2+) contacts are provided by Cys-816, Cys-890, Cys-897, and Cys-900.

It belongs to the RNA polymerase beta' chain family. In terms of assembly, the RNAP catalytic core consists of 2 alpha, 1 beta, 1 beta' and 1 omega subunit. When a sigma factor is associated with the core the holoenzyme is formed, which can initiate transcription. It depends on Mg(2+) as a cofactor. Requires Zn(2+) as cofactor.

It catalyses the reaction RNA(n) + a ribonucleoside 5'-triphosphate = RNA(n+1) + diphosphate. Functionally, DNA-dependent RNA polymerase catalyzes the transcription of DNA into RNA using the four ribonucleoside triphosphates as substrates. The chain is DNA-directed RNA polymerase subunit beta' from Aromatoleum aromaticum (strain DSM 19018 / LMG 30748 / EbN1) (Azoarcus sp. (strain EbN1)).